The sequence spans 86 residues: Gas vesicle protein M (86 aa).

Belongs to the gas vesicle GvpA family. As to quaternary structure, gvpF to GvpM interact with each other in vitro, and may form multi-subunit complex(es). Might interact with GvpA.

It localises to the gas vesicle. Functionally, proteins GvpF to GvpM might be involved in nucleating gas vesicle formation. A minor component of the gas vesicle. Gas vesicles are small, hollow, gas filled protein structures found in some microorganisms. They allow positioning of halobacteria at the optimal depth for growth in the poorly aerated, shallow brine pools of their habitat. Expression of a 9.5 kb mc-vac DNA fragment containing 2 divergently transcribed regions (gvpD-gvpE-gvpF-gvpG-gvpH-gvpI-gvpJ-gvpK-gvpL-gvpM and gvpA-gvpC-gvpN-gvpO) allows H.volcanii to produce gas vesicles. This is Gas vesicle protein M from Haloferax mediterranei (strain ATCC 33500 / DSM 1411 / JCM 8866 / NBRC 14739 / NCIMB 2177 / R-4) (Halobacterium mediterranei).